A 208-amino-acid chain; its full sequence is Coiled-coil domain-containing protein 25 (208 aa).

The Extracellular segment spans residues 1 to 105; sequence MVFYFTSSSV…SNLKKTADMD (105 aa). A DNA-binding region spans residues 21–25; that stretch reads KDKYE. An N6-acetyllysine modification is found at Lys-23. A helical membrane pass occupies residues 106–122; it reads VGQIGFHRQKDVKIVTV. A coiled-coil region spans residues 117–187; sequence VKIVTVEKKV…REMDELRSYS (71 aa). The Cytoplasmic portion of the chain corresponds to 123 to 208; the sequence is EKKVNEILNR…QDGNDSDEFM (86 aa). The segment covering 145-184 has biased composition (basic and acidic residues); the sequence is EAEKECRDHEERNEKKAQIQEMKRREKEEMKKKREMDELR. The segment at 145-208 is disordered; the sequence is EAEKECRDHE…QDGNDSDEFM (64 aa). Position 204 is a phosphoserine (Ser-204).

Belongs to the CCDC25 family. In terms of assembly, interacts (via cytoplasmic region) with ILK.

The protein resides in the cell membrane. It is found in the endomembrane system. In terms of biological role, transmembrane receptor that senses neutrophil extracellular traps (NETs) and triggers the ILK-PARVB pathway to enhance cell motility. NETs are mainly composed of DNA fibers and are released by neutrophils to bind pathogens during inflammation. Formation of NETs is also associated with cancer metastasis, NET-DNA acting as a chemotactic factor to attract cancer cells. Specifically binds NETs on its extracellular region, in particular the 8-OHdG-enriched DNA present in NETs, and recruits ILK, initiating the ILK-PARVB cascade to induce cytoskeleton rearrangement and directional migration of cells. This Bos taurus (Bovine) protein is Coiled-coil domain-containing protein 25.